We begin with the raw amino-acid sequence, 662 residues long: Retaining alpha-galactosidase (662 aa).

The N-terminal stretch at 1-19 (MKKLTFLLLCVLCTLSLQA) is a signal peptide. Ca(2+) is bound at residue Glu174. Residue Asp415 is the Nucleophile of the active site. Ca(2+)-binding residues include Glu464 and Glu470. Catalysis depends on Glu470, which acts as the Proton donor/acceptor.

The protein belongs to the glycosyl hydrolase 97 family. In terms of assembly, monomer. Ca(2+) is required as a cofactor.

The enzyme catalyses Hydrolysis of terminal, non-reducing alpha-D-galactose residues in alpha-D-galactosides, including galactose oligosaccharides, galactomannans and galactolipids.. Inhibited by EDTA in vitro. Functionally, galactosidase that is able to hydrolyze the alpha-1,6 disaccharide melibiose and the synthetic p-nitrophenyl alpha-galactoside substrate (pNP-Gal), with retention of the anomeric configuration. Does not hydrolyze DNP-Glc or pNP-Glc. The chain is Retaining alpha-galactosidase from Bacteroides thetaiotaomicron (strain ATCC 29148 / DSM 2079 / JCM 5827 / CCUG 10774 / NCTC 10582 / VPI-5482 / E50).